Here is a 1883-residue protein sequence, read N- to C-terminus: Lysophospholipase NTE1 (1883 aa).

The Cytoplasmic portion of the chain corresponds to 1–75 (MSQVPVASPA…LLRVVLASLN (75 aa)). Residues 76–96 (LIRILATFSTITVPSLVYAIL) traverse the membrane as a helical segment. The Lumenal portion of the chain corresponds to 97 to 103 (HYSLTLQ). The chain crosses the membrane as a helical span at residues 104–124 (LNFPSLALLFLTSLISAFIWL). Residues 125 to 1883 (RYRHLNKYER…AGISARRNSI (1759 aa)) lie on the Cytoplasmic side of the membrane. 6 disordered regions span residues 284 to 327 (HLAP…FNPP), 355 to 410 (ERLG…LYHA), 618 to 693 (SQRS…MVGP), 716 to 764 (SAQP…RKGS), 921 to 1069 (EEDR…ATNS), and 1084 to 1108 (LHQQ…GKRS). The span at 311 to 327 (NNATAPTSPYSSAFNPP) shows a compositional bias: polar residues. Positions 372-383 (ARTASSGTASAT) are enriched in low complexity. Over residues 650 to 668 (PSLTTSSKQSNQKPTSSRI) the composition is skewed to polar residues. Residues 863–1158 (AGHG…RRPI) and 1166–1285 (RLLS…IARR) contribute to the a nucleoside 3',5'-cyclic phosphate site. The segment covering 936–948 (TDASSGSSRQNRP) has biased composition (polar residues). The segment covering 964–974 (LLDERNLREAD) has biased composition (basic and acidic residues). Composition is skewed to polar residues over residues 988-998 (ISSNGDGNSGS) and 1084-1100 (LHQQ…QSSQ). The PNPLA domain maps to 1544-1708 (LVLGGGGARG…VDNLPVTVML (165 aa)). The GXGXXG motif lies at 1548 to 1553 (GGGARG). Residues 1575 to 1579 (GTSIG) carry the GXSXG motif. S1577 (nucleophile) is an active-site residue. D1695 functions as the Proton acceptor in the catalytic mechanism. A DGA/G motif is present at residues 1695–1697 (DGG). The interval 1852–1883 (DESGVGGGVRKIRKKRRRTRRKAGISARRNSI) is disordered. Basic residues predominate over residues 1861–1874 (RKIRKKRRRTRRKA).

Belongs to the NTE family.

The protein localises to the endoplasmic reticulum membrane. The catalysed reaction is a 1-acyl-sn-glycero-3-phosphocholine + H2O = sn-glycerol 3-phosphocholine + a fatty acid + H(+). Inhibited by organophosphorus esters. Intracellular phospholipase B that catalyzes the double deacylation of phosphatidylcholine (PC) to glycerophosphocholine (GroPCho). Plays an important role in membrane lipid homeostasis. Responsible for the rapid PC turnover in response to inositol, elevated temperatures, or when choline is present in the growth medium. The polypeptide is Lysophospholipase NTE1 (NTE1) (Mycosarcoma maydis (Corn smut fungus)).